The chain runs to 1242 residues: Insulin receptor substrate 1 (1242 aa).

Serine 3 is subject to Phosphoserine. Residues serine 3–serine 137 form a mediates interaction with PHIP region. A PH domain is found at aspartate 12 to asparagine 115. Serine 99 carries the phosphoserine; by CK2 modification. The IRS-type PTB domain occupies phenylalanine 160–phenylalanine 264. Positions aspartate 262–glutamate 430 are disordered. Residues lysine 269–serine 281 are compositionally biased toward low complexity. Phosphoserine; by RPS6KB1 is present on residues serine 270 and serine 307. Serine 312 is subject to Phosphoserine; by IKKB, MAPK8 and RPS6KB1. A phosphoserine mark is found at serine 315, serine 323, serine 330, serine 345, and serine 348. Over residues threonine 354–alanine 363 the composition is skewed to basic residues. 2 stretches are compositionally biased toward low complexity: residues serine 383 to serine 404 and serine 412 to glycine 424. The residue at position 419 (serine 419) is a Phosphoserine. A phosphothreonine mark is found at threonine 446 and threonine 453. A Phosphotyrosine; by INSR modification is found at tyrosine 465. The YXXM motif 1 signature appears at tyrosine 465–methionine 468. Residue serine 527 is modified to Phosphoserine; by RPS6KB1. The YXXM motif 2 signature appears at tyrosine 551–methionine 554. Residues leucine 592–aspartate 610 are compositionally biased toward basic and acidic residues. The interval leucine 592–serine 616 is disordered. Tyrosine 612 bears the Phosphotyrosine; by INSR mark. A YXXM motif 3 motif is present at residues tyrosine 612–methionine 615. Serine 616 and serine 629 each carry phosphoserine. Residue tyrosine 632 is modified to Phosphotyrosine; by INSR. The short motif at tyrosine 632–methionine 635 is the YXXM motif 4 element. Position 636 is a phosphoserine; by RPS6KB1 (serine 636). A Phosphotyrosine modification is found at tyrosine 662. The YXXM motif 5 motif lies at tyrosine 662–methionine 665. The interval serine 668–threonine 693 is disordered. The YXXM motif 6 motif lies at tyrosine 732–methionine 735. 2 disordered regions span residues phenylalanine 771–glutamate 900 and serine 918–glycine 937. Residues arginine 776 to arginine 785 are compositionally biased toward basic and acidic residues. Serine 794 bears the Phosphoserine; by AMPK and SIK2 mark. The segment covering alanine 801–serine 815 has biased composition (low complexity). Serine 892 is modified (phosphoserine). Tyrosine 896 carries the post-translational modification Phosphotyrosine; by INSR. Residues tyrosine 896 to asparagine 898 form a GRB2-binding region. A compositionally biased stretch (polar residues) spans serine 918–glutamine 928. 2 positions are modified to phosphotyrosine; by INSR: tyrosine 941 and tyrosine 989. 3 consecutive short sequence motifs (YXXM motif) follow at residues tyrosine 941–methionine 944, tyrosine 989–methionine 992, and tyrosine 1012–methionine 1015. The segment at serine 1057 to phenylalanine 1146 is disordered. A compositionally biased stretch (polar residues) spans threonine 1073–alanine 1085. At serine 1100 the chain carries Phosphoserine. Serine 1101 is subject to Phosphoserine; by RPS6KB1 and PKC/PRKCQ. Over residues glutamate 1102–glycine 1114 the composition is skewed to polar residues. The residue at position 1179 (tyrosine 1179) is a Phosphotyrosine; by INSR. Glycyl lysine isopeptide (Lys-Gly) (interchain with G-Cter in ubiquitin) cross-links involve residues lysine 1186 and lysine 1189. The tract at residues glutamine 1190–glutamine 1242 is disordered. Positions glutamate 1198 to glutamine 1209 are enriched in pro residues. Low complexity predominate over residues proline 1210–arginine 1220. Position 1229 is a phosphotyrosine; by INSR (tyrosine 1229).

Interacts with UBTF and PIK3CA. Interacts (via phosphorylated YXXM motifs) with PIK3R1. Interacts with ROCK1 and FER. Interacts (via PH domain) with PHIP. Interacts with GRB2. Interacts with SOCS7. Interacts (via IRS-type PTB domain) with IGF1R and INSR (via the tyrosine-phosphorylated NPXY motif). Interacts with ALK. Interacts with EIF2AK2/PKR. Interacts with GKAP1. Interacts with DGKZ in the absence of insulin; insulin stimulation decreases this interaction. Found in a ternary complex with DGKZ and PIP5K1A in the absence of insulin stimulation. Interacts with SQSTM1; the interaction is disrupted by the presence of tensin TNS2. Interacts with NCK1 (via SH2 domain). Interacts with NCK2 (via SH3 domain). Interacts with SH2B1; this interaction enhances leptin-induced activation of the PI3-kinase pathway. Interacts with DVL2; this interaction promotes the Wnt/beta-catenin signaling pathway. Post-translationally, serine phosphorylation of IRS1 is a mechanism for insulin resistance. Ser-307, Ser-312, Ser-315, and Ser-323 phosphorylations inhibit insulin action through disruption of IRS1 interaction with the insulin receptor INSR. Phosphorylation of Tyr-896 is required for GRB2-binding. Phosphorylated by ALK. Phosphorylated at Ser-270, Ser-307, Ser-636 and Ser-1101 by RPS6KB1; phosphorylation induces accelerated degradation of IRS1. Phosphorylated on tyrosine residues in response to insulin. In skeletal muscles, dephosphorylated on Tyr-612 by TNS2 under anabolic conditions; dephosphorylation results in the proteasomal degradation of IRS1. In terms of processing, ubiquitinated by the Cul7-RING(FBXW8) complex in a mTOR-dependent manner, leading to its degradation: the Cul7-RING(FBXW8) complex recognizes and binds IRS1 previously phosphorylated by S6 kinase (RPS6KB1 or RPS6KB2). Ubiquitinated by TRAF4 through 'Lys-29' linkage; this ubiquitination regulates the interaction of IRS1 with IGFR and IRS1 tyrosine phosphorylation upon IGF1 stimulation. S-nitrosylation at by BLVRB inhibits its activity.

Its subcellular location is the cytoplasm. It is found in the nucleus. Functionally, signaling adapter protein that participates in the signal transduction from two prominent receptor tyrosine kinases, insulin receptor/INSR and insulin-like growth factor I receptor/IGF1R. Plays therefore an important role in development, growth, glucose homeostasis as well as lipid metabolism. Upon phosphorylation by the insulin receptor, functions as a signaling scaffold that propagates insulin action through binding to SH2 domain-containing proteins including the p85 regulatory subunit of PI3K, NCK1, NCK2, GRB2 or SHP2. Recruitment of GRB2 leads to the activation of the guanine nucleotide exchange factor SOS1 which in turn triggers the Ras/Raf/MEK/MAPK signaling cascade. Activation of the PI3K/AKT pathway is responsible for most of insulin metabolic effects in the cell, and the Ras/Raf/MEK/MAPK is involved in the regulation of gene expression and in cooperation with the PI3K pathway regulates cell growth and differentiation. Acts a positive regulator of the Wnt/beta-catenin signaling pathway through suppression of DVL2 autophagy-mediated degradation leading to cell proliferation. This chain is Insulin receptor substrate 1 (IRS1), found in Homo sapiens (Human).